Consider the following 397-residue polypeptide: Major outer membrane porin, serovar H (397 aa).

Positions 1–22 are cleaved as a signal peptide; sequence MKKLLKSVLVFAALSSASSLQA.

It belongs to the chlamydial porin (CP) (TC 1.B.2) family. In terms of assembly, part of a disulfide cross-linked outer membrane complex (COMC) composed of the major outer membrane porin (MOMP), the small cysteine-rich protein (OmcA) and the large cysteine-rich periplasmic protein (OmcB).

The protein resides in the cell outer membrane. Functionally, in elementary bodies (EBs, the infectious stage, which is able to survive outside the host cell) provides the structural integrity of the outer envelope through disulfide cross-links with the small cysteine-rich protein and the large cysteine-rich periplasmic protein. It has been described in publications as the Sarkosyl-insoluble COMC (Chlamydia outer membrane complex), and serves as the functional equivalent of peptidoglycan. Its function is as follows. Permits diffusion of specific solutes through the outer membrane. In Chlamydia trachomatis, this protein is Major outer membrane porin, serovar H (ompA).